Reading from the N-terminus, the 1462-residue chain is DNA polymerase alpha catalytic subunit (1462 aa).

Disordered stretches follow at residues 1–33 (MAPVHGDDSLSDSGSFVSSRARREKKSKKGRQE) and 98–123 (DLEDDALDADEKGKDGKARNKDKRNV). Basic residues predominate over residues 20-29 (RARREKKSKK). Residues 106–116 (ADEKGKDGKAR) show a composition bias toward basic and acidic residues. Thr-174 is subject to Phosphothreonine. 3 positions are modified to phosphoserine: Ser-186, Ser-190, and Ser-209. Lys-224 is modified (N6-acetyllysine). The interval 232-251 (DVQVESTEEEQESGAMEFED) is disordered. At Thr-406 the chain carries Phosphothreonine. A DNA-binding region spans residues 650 to 715 (RINVCKAPHW…YHLSELVQQI (66 aa)). Lys-970 is modified (N6-succinyllysine). The segment at 1245 to 1376 (QFRVHHYHKD…TGPLCPACMK (132 aa)) is DNA-binding. Zn(2+)-binding residues include Cys-1283, Cys-1286, Cys-1310, Cys-1315, Cys-1348, Cys-1353, Cys-1371, and Cys-1374. The CysA-type zinc-finger motif lies at 1283 to 1318 (CPTCGTENIYDNVFDGSGTDMEPSLYRCSNIDCKAS). Positions 1348 to 1374 (CEEPTCRNRTRHLPLQFSRTGPLCPAC) match the CysB motif motif.

It belongs to the DNA polymerase type-B family. Component of the alpha DNA polymerase complex (also known as the alpha DNA polymerase-primase complex) consisting of four subunits: the catalytic subunit POLA1, the regulatory subunit POLA2, and the primase complex subunits PRIM1 and PRIM2 respectively. Interacts with PARP1; this interaction functions as part of the control of replication fork progression. Interacts with MCM10 and WDHD1; these interactions recruit the polymerase alpha complex to the pre-replicative complex bound to DNA. Interacts with RPA1; this interaction stabilizes the replicative complex and reduces the misincorporation rate of DNA polymerase alpha by acting as a fidelity clamp. In terms of assembly, (Microbial infection) Interacts with SV40 Large T antigen; this interaction allows viral DNA replication. As to quaternary structure, (Microbial infection) Interacts with herpes simplex virus 1/HHV-1 replication origin-binding protein UL9. Post-translationally, a 165 kDa form is probably produced by proteolytic cleavage at Lys-124.

It is found in the nucleus. The protein localises to the cytoplasm. The protein resides in the cytosol. The catalysed reaction is DNA(n) + a 2'-deoxyribonucleoside 5'-triphosphate = DNA(n+1) + diphosphate. With respect to regulation, autoinhibited in apo-primosome, where the zinc motif of POLA1 and oligonucleotide/olicosaccharide-binding domain of POLA2 are placed into the active site blocking RNA:DNA duplex entry. In terms of biological role, catalytic subunit of the DNA polymerase alpha complex (also known as the alpha DNA polymerase-primase complex) which plays an essential role in the initiation of DNA synthesis. During the S phase of the cell cycle, the DNA polymerase alpha complex (composed of a catalytic subunit POLA1, a regulatory subunit POLA2 and two primase subunits PRIM1 and PRIM2) is recruited to DNA at the replicative forks via direct interactions with MCM10 and WDHD1. The primase subunit of the polymerase alpha complex initiates DNA synthesis by oligomerising short RNA primers on both leading and lagging strands. These primers are initially extended by the polymerase alpha catalytic subunit and subsequently transferred to polymerase delta and polymerase epsilon for processive synthesis on the lagging and leading strand, respectively. The reason this transfer occurs is because the polymerase alpha has limited processivity and lacks intrinsic 3' exonuclease activity for proofreading error, and therefore is not well suited for replicating long complexes. In the cytosol, responsible for a substantial proportion of the physiological concentration of cytosolic RNA:DNA hybrids, which are necessary to prevent spontaneous activation of type I interferon responses. The polypeptide is DNA polymerase alpha catalytic subunit (POLA1) (Homo sapiens (Human)).